A 344-amino-acid chain; its full sequence is L-rhamnose-proton symporter (344 aa).

10 helical membrane passes run 4 to 24, 38 to 58, 68 to 88, 101 to 121, 137 to 157, 175 to 195, 214 to 234, 259 to 279, 290 to 310, and 323 to 343; these read AITM…CFYA, WSVG…ALLL, FSLS…IGNI, MGIG…TPII, TLLG…AGQL, LVLA…MNAA, LPSY…FCFI, VLLS…YAWG, ISWM…GLVL, and VLSL…IGMA.

It belongs to the L-rhamnose transporter (TC 2.A.7.6) family.

The protein localises to the cell inner membrane. The enzyme catalyses L-rhamnopyranose(in) + H(+)(in) = L-rhamnopyranose(out) + H(+)(out). Functionally, uptake of L-rhamnose across the cytoplasmic membrane with the concomitant transport of protons into the cell (symport system). In Escherichia coli (strain ATCC 8739 / DSM 1576 / NBRC 3972 / NCIMB 8545 / WDCM 00012 / Crooks), this protein is L-rhamnose-proton symporter.